The chain runs to 433 residues: Homogentisate 1,2-dioxygenase (433 aa).

H288 serves as the catalytic Proton acceptor. Fe cation-binding residues include H331 and E337. 2 residues coordinate homogentisate: Y346 and H367. Position 367 (H367) interacts with Fe cation.

This sequence belongs to the homogentisate dioxygenase family. As to quaternary structure, hexamer; dimer of trimers. Requires Fe cation as cofactor.

It catalyses the reaction homogentisate + O2 = 4-maleylacetoacetate + H(+). It participates in amino-acid degradation; L-phenylalanine degradation; acetoacetate and fumarate from L-phenylalanine: step 4/6. Involved in the catabolism of homogentisate (2,5-dihydroxyphenylacetate or 2,5-OH-PhAc), a central intermediate in the degradation of phenylalanine and tyrosine. Catalyzes the oxidative ring cleavage of the aromatic ring of homogentisate to yield maleylacetoacetate. The chain is Homogentisate 1,2-dioxygenase from Pseudomonas putida (strain W619).